A 225-amino-acid polypeptide reads, in one-letter code: uncharacterized protein (225 aa).

6 consecutive transmembrane segments (helical) span residues 1-21, 31-51, 56-76, 88-108, 145-165, and 205-225; these read MFIG…AKKV, SPLL…NVPY, LGGG…AIPL, VEII…TALI, VTAV…PMVI, and VSMI…LSFM.

It belongs to the YohK (E.coli)/YwbG (IPA-22R) (B.subtilis) family.

It is found in the cell membrane. This is an uncharacterized protein from Bacillus subtilis (strain 168).